A 171-amino-acid chain; its full sequence is Secreted LysM effector Blys4 (171 aa).

The LysM domain occupies K125–L169.

It belongs to the secreted LysM effector family.

Might have a role in sequestration of chitin oligosaccharides (breakdown products of fungal cell walls that are released during invasion and act as triggers of host immunity) to dampen host defense. This chain is Secreted LysM effector Blys4, found in Beauveria bassiana (strain ARSEF 2860) (White muscardine disease fungus).